The sequence spans 383 residues: UDP-N-acetylglucosamine--N-acetylmuramyl-(pentapeptide) pyrophosphoryl-undecaprenol N-acetylglucosamine transferase (383 aa).

UDP-N-acetyl-alpha-D-glucosamine contacts are provided by residues 10–12 (TGG), asparagine 124, arginine 165, serine 190, isoleucine 245, and glutamine 290. The interval 363–383 (SPFGQAREPGQKPARPPDPAS) is disordered.

This sequence belongs to the glycosyltransferase 28 family. MurG subfamily.

The protein resides in the cell inner membrane. The catalysed reaction is di-trans,octa-cis-undecaprenyl diphospho-N-acetyl-alpha-D-muramoyl-L-alanyl-D-glutamyl-meso-2,6-diaminopimeloyl-D-alanyl-D-alanine + UDP-N-acetyl-alpha-D-glucosamine = di-trans,octa-cis-undecaprenyl diphospho-[N-acetyl-alpha-D-glucosaminyl-(1-&gt;4)]-N-acetyl-alpha-D-muramoyl-L-alanyl-D-glutamyl-meso-2,6-diaminopimeloyl-D-alanyl-D-alanine + UDP + H(+). The protein operates within cell wall biogenesis; peptidoglycan biosynthesis. Functionally, cell wall formation. Catalyzes the transfer of a GlcNAc subunit on undecaprenyl-pyrophosphoryl-MurNAc-pentapeptide (lipid intermediate I) to form undecaprenyl-pyrophosphoryl-MurNAc-(pentapeptide)GlcNAc (lipid intermediate II). In Anaeromyxobacter dehalogenans (strain 2CP-1 / ATCC BAA-258), this protein is UDP-N-acetylglucosamine--N-acetylmuramyl-(pentapeptide) pyrophosphoryl-undecaprenol N-acetylglucosamine transferase.